The primary structure comprises 87 residues: Apolipoprotein C-I (87 aa).

Residues 1–26 (MRFILSLPVLAVVLAMVLEGPAPAQA) form the signal peptide.

This sequence belongs to the apolipoprotein C1 family.

The protein resides in the secreted. Inhibitor of lipoprotein binding to the low density lipoprotein (LDL) receptor, LDL receptor-related protein, and very low density lipoprotein (VLDL) receptor. Associates with high density lipoproteins (HDL) and the triacylglycerol-rich lipoproteins in the plasma and makes up about 10% of the protein of the VLDL and 2% of that of HDL. Appears to interfere directly with fatty acid uptake and is also the major plasma inhibitor of cholesteryl ester transfer protein (CETP). Binds free fatty acids and reduces their intracellular esterification. Modulates the interaction of APOE with beta-migrating VLDL and inhibits binding of beta-VLDL to the LDL receptor-related protein. This Pteropus alecto (Black flying fox) protein is Apolipoprotein C-I (APOC1).